Consider the following 248-residue polypeptide: Thioredoxin-like protein AAED1, chloroplastic (248 aa).

The N-terminal 52 residues, 1–52 (MAIALSSSSTITSITLQPKLKTIHGLGTVLPGYSVKSHFRSVSLRRSAVVVS), are a transit peptide targeting the chloroplast. Ala-53 is subject to N-acetylalanine.

It belongs to the peroxiredoxin-like PRXL2 family. PRXL2C subfamily.

It is found in the plastid. It localises to the chloroplast. The polypeptide is Thioredoxin-like protein AAED1, chloroplastic (Arabidopsis thaliana (Mouse-ear cress)).